Reading from the N-terminus, the 245-residue chain is Protein ARV 1 (245 aa).

Helical transmembrane passes span 70-90 (INPATVNIQHLLWKLVFAYLL), 117-137 (IKVLIGVLSANAAFIISFAIA), 163-183 (IFLLAMLVWEFPMSVIFFVDI), 200-220 (TMTRCIAVCLIAHLIRFLVGQ), and 224-244 (PTIFLIQIGSLLQYMSYFFRI).

This sequence belongs to the ARV1 family. Restricted to tissues in which cells are actively dividing or expanding. Mostly expressed in roots and flowers, and, to a lower extent, in stems and leaves.

The protein localises to the endoplasmic reticulum membrane. Functionally, mediator of sterol homeostasis involved in sterol uptake, trafficking and distribution into membranes. Also regulates the sphingolipid metabolism. This is Protein ARV 1 from Arabidopsis thaliana (Mouse-ear cress).